A 490-amino-acid polypeptide reads, in one-letter code: Glutamate--tRNA ligase (490 aa).

The 'HIGH' region motif lies at 13–23 (PSPTGTPHVGL). Residues 257–261 (KLSKR) carry the 'KMSKS' region motif. Lysine 260 is an ATP binding site.

Belongs to the class-I aminoacyl-tRNA synthetase family. Glutamate--tRNA ligase type 1 subfamily. In terms of assembly, monomer.

The protein localises to the cytoplasm. It carries out the reaction tRNA(Glu) + L-glutamate + ATP = L-glutamyl-tRNA(Glu) + AMP + diphosphate. Its function is as follows. Catalyzes the attachment of glutamate to tRNA(Glu) in a two-step reaction: glutamate is first activated by ATP to form Glu-AMP and then transferred to the acceptor end of tRNA(Glu). This Mycobacterium tuberculosis (strain ATCC 25177 / H37Ra) protein is Glutamate--tRNA ligase.